The following is a 119-amino-acid chain: Large ribosomal subunit protein bL20 (119 aa).

This sequence belongs to the bacterial ribosomal protein bL20 family.

Binds directly to 23S ribosomal RNA and is necessary for the in vitro assembly process of the 50S ribosomal subunit. It is not involved in the protein synthesizing functions of that subunit. This is Large ribosomal subunit protein bL20 from Clostridium acetobutylicum (strain ATCC 824 / DSM 792 / JCM 1419 / IAM 19013 / LMG 5710 / NBRC 13948 / NRRL B-527 / VKM B-1787 / 2291 / W).